Reading from the N-terminus, the 318-residue chain is Beta-galactosidase small subunit (318 aa).

The protein belongs to the bacterial beta-galactosidase small subunit family. In terms of assembly, heterodimer of a large (LacL) and a small subunit (LacM).

The enzyme catalyses Hydrolysis of terminal non-reducing beta-D-galactose residues in beta-D-galactosides.. Its function is as follows. Component of a beta-galactosidase. This chain is Beta-galactosidase small subunit, found in Latilactobacillus sakei (Lactobacillus sakei).